The sequence spans 132 residues: Large ribosomal subunit protein uL14 (132 aa).

The protein belongs to the universal ribosomal protein uL14 family. In terms of assembly, part of the 50S ribosomal subunit. Forms a cluster with proteins L3 and L24e, part of which may contact the 16S rRNA in 2 intersubunit bridges.

Functionally, binds to 23S rRNA. Forms part of two intersubunit bridges in the 70S ribosome. The polypeptide is Large ribosomal subunit protein uL14 (Thermoplasma volcanium (strain ATCC 51530 / DSM 4299 / JCM 9571 / NBRC 15438 / GSS1)).